Here is a 286-residue protein sequence, read N- to C-terminus: Bifunctional protein FolD 2 (286 aa).

Residues 165-167 (GRG), T192, and I233 contribute to the NADP(+) site.

The protein belongs to the tetrahydrofolate dehydrogenase/cyclohydrolase family. In terms of assembly, homodimer.

It catalyses the reaction (6R)-5,10-methylene-5,6,7,8-tetrahydrofolate + NADP(+) = (6R)-5,10-methenyltetrahydrofolate + NADPH. It carries out the reaction (6R)-5,10-methenyltetrahydrofolate + H2O = (6R)-10-formyltetrahydrofolate + H(+). It functions in the pathway one-carbon metabolism; tetrahydrofolate interconversion. Its function is as follows. Catalyzes the oxidation of 5,10-methylenetetrahydrofolate to 5,10-methenyltetrahydrofolate and then the hydrolysis of 5,10-methenyltetrahydrofolate to 10-formyltetrahydrofolate. The polypeptide is Bifunctional protein FolD 2 (Salinispora arenicola (strain CNS-205)).